Reading from the N-terminus, the 65-residue chain is Large ribosomal subunit protein uL30 (65 aa).

It belongs to the universal ribosomal protein uL30 family. As to quaternary structure, part of the 50S ribosomal subunit.

The chain is Large ribosomal subunit protein uL30 from Desulfosudis oleivorans (strain DSM 6200 / JCM 39069 / Hxd3) (Desulfococcus oleovorans).